We begin with the raw amino-acid sequence, 278 residues long: Probable esterase TOX9 (278 aa).

Active-site charge relay system residues include Ser119, Asp222, and His250.

The protein belongs to the LovG family.

The protein operates within mycotoxin biosynthesis. In terms of biological role, probable esterase; part of the Tox1A locus, one of the 2 loci that mediate the biosynthesis of T-toxin, a family of linear polyketides 37 to 45 carbons in length, of which the major component is 41 carbons, and which leads to high virulence to maize. One of the PKSs (PKS1 or PKS2) could synthesize a precursor, used subsequently by the other PKS as starter unit, to add additional carbons. Variability in the length of the final carbon backbone C35-47 could be achieved by varying the number of condensation cycles, or use of different starter or extender units or might be due to decarboxylation of the penultimate product, catalyzed by DEC1. Additional proteins are required for the biosynthesis of T-toxin, including oxidoreductases RED1, RED2, RED3, LAM1 and OXI1, as well as esterase TOX9. In Cochliobolus heterostrophus (strain C4 / ATCC 48331 / race T) (Southern corn leaf blight fungus), this protein is Probable esterase TOX9.